The sequence spans 98 residues: Putative septation protein SpoVG (98 aa).

It belongs to the SpoVG family.

Functionally, could be involved in septation. This is Putative septation protein SpoVG from Alkaliphilus metalliredigens (strain QYMF).